A 168-amino-acid chain; its full sequence is Thermonuclease (168 aa).

Residues 1 to 27 (MKKITTGVLILAIAIVVLIFQYINGDG) form the signal peptide. Catalysis depends on residues Arg-64, Glu-72, and Arg-114.

It belongs to the thermonuclease family. Ca(2+) is required as a cofactor.

It is found in the secreted. It catalyses the reaction Endonucleolytic cleavage to nucleoside 3'-phosphates and 3'-phosphooligonucleotide end-products.. Functionally, enzyme that catalyzes the hydrolysis of both DNA and RNA at the 5'-position of the phosphodiester bond. This chain is Thermonuclease (nucI), found in Staphylococcus intermedius.